The following is a 100-amino-acid chain: Urease subunit gamma (100 aa).

It belongs to the urease gamma subunit family. Heterotrimer of UreA (gamma), UreB (beta) and UreC (alpha) subunits. Three heterotrimers associate to form the active enzyme.

It is found in the cytoplasm. It carries out the reaction urea + 2 H2O + H(+) = hydrogencarbonate + 2 NH4(+). Its pathway is nitrogen metabolism; urea degradation; CO(2) and NH(3) from urea (urease route): step 1/1. The sequence is that of Urease subunit gamma from Variovorax paradoxus (strain S110).